The following is a 365-amino-acid chain: uncharacterized protein (365 aa).

Residue 29 to 36 participates in ATP binding; it reads GPLNSGKS.

This sequence belongs to the archaeal ATPase family.

This is an uncharacterized protein from Methanocaldococcus jannaschii (strain ATCC 43067 / DSM 2661 / JAL-1 / JCM 10045 / NBRC 100440) (Methanococcus jannaschii).